Here is a 227-residue protein sequence, read N- to C-terminus: uncharacterized protein (227 aa).

Positions 2–115 constitute a Response regulatory domain; sequence KILMIEDNVS…TLVARIKAVI (114 aa). 4-aspartylphosphate is present on Asp51. The segment at residues 128–226 is a DNA-binding region (ompR/PhoB-type); sequence EDMIETECFT…VWGVGYKFDE (99 aa).

Post-translationally, phosphorylated by YclK.

Its subcellular location is the cytoplasm. Could be member of the two-component regulatory system YclK/YclJ. This is an uncharacterized protein from Bacillus subtilis (strain 168).